Consider the following 261-residue polypeptide: Thioesterase TesA (261 aa).

Residues methionine 1 to alanine 24 form a disordered region. Residues serine 104, aspartate 208, and histidine 236 contribute to the active site.

The protein belongs to the thioesterase family.

The catalysed reaction is a fatty acyl-CoA + H2O = a fatty acid + CoA + H(+). In terms of biological role, involved in the synthesis of both phthiocerol dimycocerosates (PDIMs) and phenolic glycolipids (PGLs), which are structurally related lipids non-covalently bound to the outer cell wall layer of M.tuberculosis and are important virulence factors. The chain is Thioesterase TesA (tesA) from Mycobacterium bovis (strain ATCC BAA-935 / AF2122/97).